The following is a 34-amino-acid chain: COP9 signalosome complex subunit 5a (34 aa).

This sequence belongs to the peptidase M67A family. CSN5 subfamily. Component of the CSN complex, probably composed of CSN1, CSN2, CSN3, CSN4, CSN5 (CSN5A or CSN5B), CSN6 (CSN6A or CSN6B), CSN7 and CSN8. A divalent metal cation is required as a cofactor.

The protein localises to the cytoplasm. It is found in the nucleus. Probable protease subunit of the COP9 signalosome complex (CSN), a complex involved in various cellular and developmental processes such as photomorphogenesis and auxin and jasmonate responses. The CSN complex is an essential regulator of the ubiquitin (Ubl) conjugation pathway by mediating the deneddylation of the cullin subunits of the SCF-type E3 ligase complexes, leading to decrease the Ubl ligase activity of SCF. In the complex, it probably acts as the catalytic center that mediates the cleavage of Nedd8 from cullins. It however has no metalloprotease activity by itself and requires the other subunits of the CSN complex. The CSN complex is involved in repression of photomorphogenesis in darkness by regulating the activity of COP1-containing Ubl ligase complexes. The polypeptide is COP9 signalosome complex subunit 5a (CSN5A) (Brassica oleracea (Wild cabbage)).